A 363-amino-acid chain; its full sequence is Heat-inducible transcription repressor HrcA (363 aa).

The protein belongs to the HrcA family.

In terms of biological role, negative regulator of class I heat shock genes (grpE-dnaK-dnaJ and groELS operons). Prevents heat-shock induction of these operons. The protein is Heat-inducible transcription repressor HrcA of Afipia carboxidovorans (strain ATCC 49405 / DSM 1227 / KCTC 32145 / OM5) (Oligotropha carboxidovorans).